A 585-amino-acid polypeptide reads, in one-letter code: Protein FAM151A (585 aa).

A helical membrane pass occupies residues 14–34 (WVFASITCVSAVAIAAIVLAI).

Belongs to the menorin family.

Its subcellular location is the membrane. The chain is Protein FAM151A (FAM151A) from Pongo abelii (Sumatran orangutan).